Here is a 513-residue protein sequence, read N- to C-terminus: Flavonoid 3'-monooxygenase (513 aa).

The helical transmembrane segment at 1-21 threads the bilayer; sequence MATLFLTILLATVLFLILRIF. The Cytoplasmic segment spans residues 22–513; sequence SHRRNRSHNN…APNVYGLGSG (492 aa). Cys-445 contributes to the heme binding site.

Belongs to the cytochrome P450 family. Requires heme as cofactor. High expression in siliques and to a lower extent in stems, flowers and senescing leaves.

The protein localises to the endoplasmic reticulum membrane. It catalyses the reaction a 3'-unsubstituted flavone + reduced [NADPH--hemoprotein reductase] + O2 = a 3'-hydroxyflavone + oxidized [NADPH--hemoprotein reductase] + H2O + H(+). It participates in secondary metabolite biosynthesis; flavonoid biosynthesis. In terms of biological role, catalyzes the 3'-hydroxylation of the flavonoid B-ring to the 3',4'-hydroxylated state. Convert naringenin to eriodictyol and dihydrokaempferol to dihydroquercetin. This Arabidopsis thaliana (Mouse-ear cress) protein is Flavonoid 3'-monooxygenase (CYP75B1).